The primary structure comprises 381 residues: tRNA pseudouridine synthase D (381 aa).

The active-site Nucleophile is Asp-81. Positions 160–335 (GMPNYFGSQR…TLGSRRFFWV (176 aa)) constitute a TRUD domain.

The protein belongs to the pseudouridine synthase TruD family.

It catalyses the reaction uridine(13) in tRNA = pseudouridine(13) in tRNA. Responsible for synthesis of pseudouridine from uracil-13 in transfer RNAs. This is tRNA pseudouridine synthase D from Helicobacter pylori (strain J99 / ATCC 700824) (Campylobacter pylori J99).